Consider the following 681-residue polypeptide: RNA polymerase sigma factor RpoD (681 aa).

Disordered stretches follow at residues 1–60 and 239–270; these read MKKK…ETAK and DDDE…VSEK. Basic and acidic residues predominate over residues 261 to 270; the sequence is EERKKVVSEK. Positions 446–516 are sigma-70 factor domain-2; sequence MAKSNLRLVV…SRAIADQART (71 aa). The Interaction with polymerase core subunit RpoC signature appears at 470-473; it reads DLIQ. The interval 525-601 is sigma-70 factor domain-3; that stretch reads DTINRINKVM…DKNIVSSIDH (77 aa). A sigma-70 factor domain-4 region spans residues 614–668; it reads VLDQLNEREKAVIRMRFGLLDDESDRTLEEIGKELNVTRERVRQIESSAIKKLRS. The segment at residues 641–660 is a DNA-binding region (H-T-H motif); it reads LEEIGKELNVTRERVRQIES.

It belongs to the sigma-70 factor family. RpoD/SigA subfamily. As to quaternary structure, interacts transiently with the RNA polymerase catalytic core.

It is found in the cytoplasm. Functionally, sigma factors are initiation factors that promote the attachment of RNA polymerase to specific initiation sites and are then released. This sigma factor is the primary sigma factor during exponential growth. This is RNA polymerase sigma factor RpoD from Helicobacter pylori (strain J99 / ATCC 700824) (Campylobacter pylori J99).